The sequence spans 189 residues: Large ribosomal subunit protein uL5 (189 aa).

It belongs to the universal ribosomal protein uL5 family. As to quaternary structure, part of the 50S ribosomal subunit; part of the 5S rRNA/L5/L18/L25 subcomplex. Contacts the 5S rRNA and the P site tRNA. Forms a bridge to the 30S subunit in the 70S ribosome.

This is one of the proteins that bind and probably mediate the attachment of the 5S RNA into the large ribosomal subunit, where it forms part of the central protuberance. In the 70S ribosome it contacts protein S13 of the 30S subunit (bridge B1b), connecting the 2 subunits; this bridge is implicated in subunit movement. Contacts the P site tRNA; the 5S rRNA and some of its associated proteins might help stabilize positioning of ribosome-bound tRNAs. The polypeptide is Large ribosomal subunit protein uL5 (Salinispora tropica (strain ATCC BAA-916 / DSM 44818 / JCM 13857 / NBRC 105044 / CNB-440)).